A 574-amino-acid polypeptide reads, in one-letter code: Amino-acid acetyltransferase, mitochondrial (574 aa).

The transit peptide at 1 to 13 (MWRRIFAHELKYD) directs the protein to the mitochondrion. One can recognise an N-acetyltransferase domain in the interval 392 to 560 (KGAKPSSNSP…KRLREFMRSV (169 aa)).

The protein belongs to the acetyltransferase family. In terms of assembly, interacts with the acetylglutamate kinase chain of AGR5,6.

Its subcellular location is the mitochondrion. The catalysed reaction is L-glutamate + acetyl-CoA = N-acetyl-L-glutamate + CoA + H(+). It functions in the pathway amino-acid biosynthesis; L-arginine biosynthesis; N(2)-acetyl-L-ornithine from L-glutamate: step 1/4. With respect to regulation, feedback inhibition by L-arginine. Functionally, N-acetylglutamate synthase involved in arginine biosynthesis. The sequence is that of Amino-acid acetyltransferase, mitochondrial (ARG2) from Saccharomyces cerevisiae (strain RM11-1a) (Baker's yeast).